A 201-amino-acid chain; its full sequence is Small ribosomal subunit protein uS4c (201 aa).

The tract at residues 20-44 (GLTSKRPRAGSDLRNQSRSGKKSQY) is disordered. The region spanning 89-152 (MRLDNILFRL…NSRTLVQNLL (64 aa)) is the S4 RNA-binding domain.

It belongs to the universal ribosomal protein uS4 family. As to quaternary structure, part of the 30S ribosomal subunit. Contacts protein S5. The interaction surface between S4 and S5 is involved in control of translational fidelity.

It is found in the plastid. It localises to the chloroplast. One of the primary rRNA binding proteins, it binds directly to 16S rRNA where it nucleates assembly of the body of the 30S subunit. In terms of biological role, with S5 and S12 plays an important role in translational accuracy. The polypeptide is Small ribosomal subunit protein uS4c (rps4) (Aethionema cordifolium (Lebanon stonecress)).